A 388-amino-acid chain; its full sequence is Phosphopentomutase (388 aa).

Mn(2+) contacts are provided by Asp10, Asp282, His287, Asp323, His324, and His335.

Belongs to the phosphopentomutase family. It depends on Mn(2+) as a cofactor.

It localises to the cytoplasm. The enzyme catalyses 2-deoxy-alpha-D-ribose 1-phosphate = 2-deoxy-D-ribose 5-phosphate. It carries out the reaction alpha-D-ribose 1-phosphate = D-ribose 5-phosphate. Its pathway is carbohydrate degradation; 2-deoxy-D-ribose 1-phosphate degradation; D-glyceraldehyde 3-phosphate and acetaldehyde from 2-deoxy-alpha-D-ribose 1-phosphate: step 1/2. Its function is as follows. Isomerase that catalyzes the conversion of deoxy-ribose 1-phosphate (dRib-1-P) and ribose 1-phosphate (Rib-1-P) to deoxy-ribose 5-phosphate (dRib-5-P) and ribose 5-phosphate (Rib-5-P), respectively. The sequence is that of Phosphopentomutase from Carboxydothermus hydrogenoformans (strain ATCC BAA-161 / DSM 6008 / Z-2901).